Reading from the N-terminus, the 207-residue chain is Small ribosomal subunit protein uS4 (207 aa).

Residues 31 to 55 form a disordered region; it reads KCKLDSKPGQHGRTSGARTSDYGTQ. Over residues 42 to 53 the composition is skewed to polar residues; that stretch reads GRTSGARTSDYG. Residues 97-160 form the S4 RNA-binding domain; that stretch reads SRLDNVVYRM…KKQARIVEAL (64 aa).

Belongs to the universal ribosomal protein uS4 family. Part of the 30S ribosomal subunit. Contacts protein S5. The interaction surface between S4 and S5 is involved in control of translational fidelity.

Functionally, one of the primary rRNA binding proteins, it binds directly to 16S rRNA where it nucleates assembly of the body of the 30S subunit. With S5 and S12 plays an important role in translational accuracy. This Burkholderia ambifaria (strain ATCC BAA-244 / DSM 16087 / CCUG 44356 / LMG 19182 / AMMD) (Burkholderia cepacia (strain AMMD)) protein is Small ribosomal subunit protein uS4.